A 602-amino-acid polypeptide reads, in one-letter code: Isocyanide synthase A (602 aa).

It belongs to the isocyanide synthase family.

In terms of biological role, isocyanide synthase involved in the biosynthesis of isocyanides (or isonitriles), a class of microbial secondary metabolites. The presence of an isonitrile moiety within a compound imparts unique biological (cytotoxic, antibacterial, and antiprotozoal) and chemical (transition metal coordination) properties and enables synthetic and biochemical applications. This Aspergillus fumigatus (strain ATCC MYA-4609 / CBS 101355 / FGSC A1100 / Af293) (Neosartorya fumigata) protein is Isocyanide synthase A.